The following is a 402-amino-acid chain: Serine/threonine-protein kinase US3 homolog (402 aa).

2 disordered regions span residues 1–21 (MSST…KVHD) and 46–88 (FPDS…SPET). Positions 102 to 386 (YNIVSSLPPG…AQDILMLPLF (285 aa)) constitute a Protein kinase domain. ATP-binding positions include 110–118 (PGSEGYIYV) and K127. The active-site Proton acceptor is the D218.

Belongs to the protein kinase superfamily. Ser/Thr protein kinase family. Post-translationally, phosphorylated by UL13 homolog; this phosphorylation regulates subsequent phosphorylation of UL31 and UL34 homologs by US3. Autophosphorylated.

The protein resides in the host cytoplasm. The protein localises to the host nucleus. It catalyses the reaction L-seryl-[protein] + ATP = O-phospho-L-seryl-[protein] + ADP + H(+). The catalysed reaction is L-threonyl-[protein] + ATP = O-phospho-L-threonyl-[protein] + ADP + H(+). Its function is as follows. Multifunctional serine/threonine kinase that plays a role in several processes including egress of virus particles from the nucleus, modulation of the actin cytoskeleton and inhibition of apoptosis. Phosphorylates UL31 and UL34 homologs, two critical regulators of capsid budding from nucleus to endoplasmic reticulum, thereby facilitating virion egress. Modulates and redistributes host components of the nuclear envelope, including LMNA, emerin/EMD and the nuclear matrix protein MATR3. Phosphorylates envelope glycoprotein B (gB), probably to direct it to the cell surface. Promotes virus intracellular spread by restructuring host cell cytoskeleton. Blocks host apoptosis to extend cell survival and allow efficient viral replication. Promotes viral gene expression by phosphorylating host HDAC2 to reduce viral genome silencing. This chain is Serine/threonine-protein kinase US3 homolog (US1206), found in Gallid herpesvirus 2 (strain GA) (GaHV-2).